The primary structure comprises 84 residues: RNA-binding protein Hfq (84 aa).

A Sm domain is found at 9–68; it reads DPYLNTLRKERVPVSIYLVNGIKLQGQIESFDQFVILLKNTVSQMVYKHAISTVVPGRPV.

This sequence belongs to the Hfq family. In terms of assembly, homohexamer.

Functionally, RNA chaperone that binds small regulatory RNA (sRNAs) and mRNAs to facilitate mRNA translational regulation in response to envelope stress, environmental stress and changes in metabolite concentrations. Also binds with high specificity to tRNAs. This Stutzerimonas stutzeri (strain A1501) (Pseudomonas stutzeri) protein is RNA-binding protein Hfq.